Here is a 128-residue protein sequence, read N- to C-terminus: 3-aminoacrylate deaminase RutC (128 aa).

Belongs to the RutC family.

The enzyme catalyses (Z)-3-aminoacrylate + H2O + H(+) = 3-oxopropanoate + NH4(+). Functionally, involved in pyrimidine catabolism. Catalyzes the deamination of 3-aminoacrylate to malonic semialdehyde, a reaction that can also occur spontaneously. RutC may facilitate the reaction and modulate the metabolic fitness, rather than catalyzing essential functions. This is 3-aminoacrylate deaminase RutC from Agrobacterium fabrum (strain C58 / ATCC 33970) (Agrobacterium tumefaciens (strain C58)).